The following is a 394-amino-acid chain: MSKEKFERTKPHVNVGTIGHVDHGKTTLTAAITTVLAKHYGGAARAFDQIDNAPEEKARGITINTSHVEYDTPTRHYAHVDCPGHADYVKNMITGAAQMDGAILVVAATDGPMPQTREHILLGRQVGVPYIIVFLNKCDMVDDEELLELVEMEVRELLSQYDFPGDDTPIVRGSALQALNGVAEWEEKILELANHLDTYIPEPERAIDQPFLLPIEDVFSISGRGTVVTGRVERGIIRTGDEVEIVGIKDTAKTTVTGVEMFRKLLDEGRAGENIGALLRGTKREEIERGQVLAKPGSITPHTDFESEVYVLSKDEGGRHTPFFKGYRPQFYFRTTDVTGTIELPEGVEMVMPGDNIKMTVSLIHPIAMDQGLRFAIREGGRTVGAGVVAKIIK.

Residues 10–204 (KPHVNVGTIG…HLDTYIPEPE (195 aa)) form the tr-type G domain. The G1 stretch occupies residues 19 to 26 (GHVDHGKT). A GTP-binding site is contributed by 19 to 26 (GHVDHGKT). A Mg(2+)-binding site is contributed by threonine 26. The segment at 60 to 64 (GITIN) is G2. The tract at residues 81–84 (DCPG) is G3. GTP contacts are provided by residues 81–85 (DCPGH) and 136–139 (NKCD). The G4 stretch occupies residues 136–139 (NKCD). The G5 stretch occupies residues 174 to 176 (SAL).

This sequence belongs to the TRAFAC class translation factor GTPase superfamily. Classic translation factor GTPase family. EF-Tu/EF-1A subfamily. Monomer.

It localises to the cytoplasm. The enzyme catalyses GTP + H2O = GDP + phosphate + H(+). Functionally, GTP hydrolase that promotes the GTP-dependent binding of aminoacyl-tRNA to the A-site of ribosomes during protein biosynthesis. This is Elongation factor Tu 2 from Haemophilus influenzae (strain 86-028NP).